Consider the following 473-residue polypeptide: Photosystem II CP43 reaction center protein (473 aa).

Residues 1–14 constitute a propeptide that is removed on maturation; sequence MKILYSLRRFYHVE. N-acetylthreonine is present on threonine 15. A Phosphothreonine modification is found at threonine 15. 5 consecutive transmembrane segments (helical) span residues 69–93, 134–155, 178–200, 255–275, and 291–312; these read LFEV…PHLA, LLGP…KDRN, KALY…RKIT, KPFA…LSYS, and WFNN…ASQA. A [CaMn4O5] cluster-binding site is contributed by glutamate 367. The helical transmembrane segment at 447-471 threads the bilayer; it reads RARAAAAGFEKGIDRDLEPVLYMNP.

This sequence belongs to the PsbB/PsbC family. PsbC subfamily. As to quaternary structure, PSII is composed of 1 copy each of membrane proteins PsbA, PsbB, PsbC, PsbD, PsbE, PsbF, PsbH, PsbI, PsbJ, PsbK, PsbL, PsbM, PsbT, PsbX, PsbY, PsbZ, Psb30/Ycf12, at least 3 peripheral proteins of the oxygen-evolving complex and a large number of cofactors. It forms dimeric complexes. Binds multiple chlorophylls and provides some of the ligands for the Ca-4Mn-5O cluster of the oxygen-evolving complex. It may also provide a ligand for a Cl- that is required for oxygen evolution. PSII binds additional chlorophylls, carotenoids and specific lipids. serves as cofactor.

The protein resides in the plastid. It localises to the chloroplast thylakoid membrane. Its function is as follows. One of the components of the core complex of photosystem II (PSII). It binds chlorophyll and helps catalyze the primary light-induced photochemical processes of PSII. PSII is a light-driven water:plastoquinone oxidoreductase, using light energy to abstract electrons from H(2)O, generating O(2) and a proton gradient subsequently used for ATP formation. The chain is Photosystem II CP43 reaction center protein from Hordeum vulgare (Barley).